The chain runs to 133 residues: Aspartate 1-decarboxylase (133 aa).

S26 (schiff-base intermediate with substrate; via pyruvic acid) is an active-site residue. S26 bears the Pyruvic acid (Ser) mark. T58 is a binding site for substrate. The active-site Proton donor is Y59. Residue 74–76 (GAA) coordinates substrate.

Belongs to the PanD family. As to quaternary structure, heterooctamer of four alpha and four beta subunits. Pyruvate serves as cofactor. Is synthesized initially as an inactive proenzyme, which is activated by self-cleavage at a specific serine bond to produce a beta-subunit with a hydroxyl group at its C-terminus and an alpha-subunit with a pyruvoyl group at its N-terminus.

It is found in the cytoplasm. It carries out the reaction L-aspartate + H(+) = beta-alanine + CO2. Its pathway is cofactor biosynthesis; (R)-pantothenate biosynthesis; beta-alanine from L-aspartate: step 1/1. Functionally, catalyzes the pyruvoyl-dependent decarboxylation of aspartate to produce beta-alanine. The sequence is that of Aspartate 1-decarboxylase from Legionella pneumophila (strain Paris).